Consider the following 75-residue polypeptide: Antimicrobial peptide Meucin-49-1 (75 aa).

An N-terminal signal peptide occupies residues 1–22; that stretch reads MNKKILLVIFIVTMLIVDEVNS.

This sequence belongs to the non-disulfide-bridged peptide (NDBP) superfamily. Long chain multifunctional peptide (group 2) family. As to expression, expressed by the venom gland.

The protein localises to the secreted. In terms of biological role, antimicrobial peptide. This is Antimicrobial peptide Meucin-49-1 from Mesobuthus eupeus (Lesser Asian scorpion).